Consider the following 186-residue polypeptide: Ribosomal RNA small subunit methyltransferase G (186 aa).

S-adenosyl-L-methionine contacts are provided by residues Gly59, Phe64, 110-111, and Arg124; that span reads IE.

This sequence belongs to the methyltransferase superfamily. RNA methyltransferase RsmG family.

The protein localises to the cytoplasm. It carries out the reaction guanosine(527) in 16S rRNA + S-adenosyl-L-methionine = N(7)-methylguanosine(527) in 16S rRNA + S-adenosyl-L-homocysteine. Functionally, specifically methylates the N7 position of guanine in position 527 of 16S rRNA. This is Ribosomal RNA small subunit methyltransferase G from Campylobacter curvus (strain 525.92).